A 123-amino-acid chain; its full sequence is Small ribosomal subunit protein uS12 (123 aa).

Asp89 is modified (3-methylthioaspartic acid).

This sequence belongs to the universal ribosomal protein uS12 family. As to quaternary structure, part of the 30S ribosomal subunit. Contacts proteins S8 and S17. May interact with IF1 in the 30S initiation complex.

Functionally, with S4 and S5 plays an important role in translational accuracy. In terms of biological role, interacts with and stabilizes bases of the 16S rRNA that are involved in tRNA selection in the A site and with the mRNA backbone. Located at the interface of the 30S and 50S subunits, it traverses the body of the 30S subunit contacting proteins on the other side and probably holding the rRNA structure together. The combined cluster of proteins S8, S12 and S17 appears to hold together the shoulder and platform of the 30S subunit. In Beijerinckia indica subsp. indica (strain ATCC 9039 / DSM 1715 / NCIMB 8712), this protein is Small ribosomal subunit protein uS12.